Here is a 416-residue protein sequence, read N- to C-terminus: Enolase (416 aa).

Gln-162 is a binding site for (2R)-2-phosphoglycerate. Glu-204 serves as the catalytic Proton donor. The Mg(2+) site is built by Asp-241, Glu-282, and Asp-309. (2R)-2-phosphoglycerate contacts are provided by Lys-334, Arg-363, Ser-364, and Lys-385. Lys-334 (proton acceptor) is an active-site residue.

The protein belongs to the enolase family. Mg(2+) is required as a cofactor.

The protein resides in the cytoplasm. Its subcellular location is the secreted. It is found in the cell surface. The enzyme catalyses (2R)-2-phosphoglycerate = phosphoenolpyruvate + H2O. It participates in carbohydrate degradation; glycolysis; pyruvate from D-glyceraldehyde 3-phosphate: step 4/5. Its function is as follows. Catalyzes the reversible conversion of 2-phosphoglycerate (2-PG) into phosphoenolpyruvate (PEP). It is essential for the degradation of carbohydrates via glycolysis. The polypeptide is Enolase (Campylobacter concisus (strain 13826)).